Reading from the N-terminus, the 358-residue chain is Thiol protease aleurain (358 aa).

A signal peptide spans 1–21 (MSAKTILSSVVLVVLVAASAA). An interaction with VSR1 region spans residues 22–42 (ANIGFDESNPIRMVSDGLREV). Residues 22–140 (ANIGFDESNP…KGSHKVTEAA (119 aa)) constitute a propeptide, activation peptide. N-linked (GlcNAc...) asparagine glycosylation occurs at Asn-125. Intrachain disulfides connect Cys-162–Cys-205 and Cys-196–Cys-238. Cys-165 is a catalytic residue. An N-linked (GlcNAc...) asparagine glycan is attached at Asn-254. Cys-296 and Cys-346 are disulfide-bonded. Residues His-305 and Asn-325 contribute to the active site.

The protein belongs to the peptidase C1 family. In terms of assembly, interacts with VSR1/BP80B. Expressed in leaves (at protein level).

Its subcellular location is the vacuole. The catalysed reaction is Hydrolysis of proteins, acting as an aminopeptidase (notably, cleaving Arg-|-Xaa bonds) as well as an endopeptidase.. Its function is as follows. May play a role in proteolysis leading to mobilization of nitrogen during senescence and starvation. The polypeptide is Thiol protease aleurain (Arabidopsis thaliana (Mouse-ear cress)).